Reading from the N-terminus, the 214-residue chain is MRIILLGAPGAGKGTQAQFIMEKYGIPQISTGDMLRAAIKAGTELGKQAKAVIDAGQLVSDEIILGLIKERIAQEDCAKGFLLDGFPRTIPQADGLKEMGVAVDYVIEFDVADDVIVERMAGRRAHLPSGRTYHVVYNPPKVEGKDDVTGEDLVVRDDDKEETVRARLGVYHSQTAPLIEYYGKEAAEGNTKYLKFDGTKQVAQVSADIEKALA.

Residue 10–15 (GAGKGT) coordinates ATP. Residues 30–59 (STGDMLRAAIKAGTELGKQAKAVIDAGQLV) form an NMP region. AMP contacts are provided by residues Thr-31, Arg-36, 57–59 (QLV), 85–88 (GFPR), and Gln-92. Positions 122 to 159 (GRRAHLPSGRTYHVVYNPPKVEGKDDVTGEDLVVRDDD) are LID. ATP-binding positions include Arg-123 and 132 to 133 (TY). AMP is bound by residues Arg-156 and Arg-167. ATP is bound at residue Lys-200.

It belongs to the adenylate kinase family. Monomer.

Its subcellular location is the cytoplasm. The catalysed reaction is AMP + ATP = 2 ADP. The protein operates within purine metabolism; AMP biosynthesis via salvage pathway; AMP from ADP: step 1/1. Catalyzes the reversible transfer of the terminal phosphate group between ATP and AMP. Plays an important role in cellular energy homeostasis and in adenine nucleotide metabolism. The polypeptide is Adenylate kinase (Vibrio vulnificus (strain CMCP6)).